The chain runs to 431 residues: F-box/kelch-repeat protein At4g19930 (431 aa).

In terms of domain architecture, F-box spans 37–83 (HEPMPYIPFDLVIEILTRLPAKSLMRFKSVSKLWSSLICSRTFTNRL). Kelch repeat units follow at residues 143–189 (LSHV…KNKK) and 227–275 (WVFI…PMLV).

The sequence is that of F-box/kelch-repeat protein At4g19930 from Arabidopsis thaliana (Mouse-ear cress).